Here is a 326-residue protein sequence, read N- to C-terminus: ATP-dependent 6-phosphofructokinase (326 aa).

ATP is bound at residue Gly-14. Arg-24–Arg-28 serves as a coordination point for ADP. Residues Arg-75–Phe-76 and Gly-105–Ser-108 each bind ATP. Asn-106 provides a ligand contact to Mg(2+). Thr-129–Asp-131 lines the substrate pocket. The active-site Proton acceptor is the Asp-131. Arg-158 contributes to the ADP binding site. Residues Arg-166 and Met-173–Arg-175 contribute to the substrate site. ADP-binding positions include Gly-189 to Glu-191, Lys-215, and Lys-216 to Ala-218. Residues Glu-225, Arg-248, and His-254–Arg-257 each bind substrate.

It belongs to the phosphofructokinase type A (PFKA) family. ATP-dependent PFK group I subfamily. Prokaryotic clade 'B1' sub-subfamily. As to quaternary structure, homotetramer. Mg(2+) is required as a cofactor.

The protein resides in the cytoplasm. The enzyme catalyses beta-D-fructose 6-phosphate + ATP = beta-D-fructose 1,6-bisphosphate + ADP + H(+). The protein operates within carbohydrate degradation; glycolysis; D-glyceraldehyde 3-phosphate and glycerone phosphate from D-glucose: step 3/4. Its activity is regulated as follows. Allosterically activated by ADP and other diphosphonucleosides, and allosterically inhibited by phosphoenolpyruvate. Catalyzes the phosphorylation of D-fructose 6-phosphate to fructose 1,6-bisphosphate by ATP, the first committing step of glycolysis. The sequence is that of ATP-dependent 6-phosphofructokinase from Coxiella burnetii (strain RSA 493 / Nine Mile phase I).